The primary structure comprises 217 residues: Large ribosomal subunit protein uL1 (217 aa).

This sequence belongs to the universal ribosomal protein uL1 family.

The protein is Large ribosomal subunit protein uL1 (RPL10A) of Candida glabrata (strain ATCC 2001 / BCRC 20586 / JCM 3761 / NBRC 0622 / NRRL Y-65 / CBS 138) (Yeast).